Reading from the N-terminus, the 132-residue chain is Cliotide T2 (132 aa).

The signal sequence occupies residues 1-28; that stretch reads MAYVRLTSLAVLFFLAASVMLNVKKTEG. The cyclopeptide (Gly-Asn) cross-link spans 29-58; that stretch reads GEFLKCGESCVQGECYTPGCSCDWPICKKN. Disulfide bonds link cysteine 34–cysteine 48, cysteine 38–cysteine 50, and cysteine 43–cysteine 55. A propeptide spans 59-132 (removed in mature form); sequence HIIATNAKTV…NLKMPMTIIN (74 aa).

Post-translationally, this is a cyclic peptide. Expressed in flower, stem, shoot and pod but not in root, leaf, seed and nodule (at protein level).

In terms of biological role, probably participates in a plant defense mechanism. Not active against Gram-negative bacteria E.coli ATCC 700926, K.pneumoniae ATTC 13883 and P.aeruginosa ATCC 39018 at concentration up to 100 uM. Has cytotoxic but no hemolytic activity. The protein is Cliotide T2 of Clitoria ternatea (Butterfly pea).